A 1378-amino-acid polypeptide reads, in one-letter code: DNA-directed RNA polymerase subunit beta (1378 aa).

The protein belongs to the RNA polymerase beta chain family. The RNAP catalytic core consists of 2 alpha, 1 beta, 1 beta' and 1 omega subunit. When a sigma factor is associated with the core the holoenzyme is formed, which can initiate transcription.

It carries out the reaction RNA(n) + a ribonucleoside 5'-triphosphate = RNA(n+1) + diphosphate. Its function is as follows. DNA-dependent RNA polymerase catalyzes the transcription of DNA into RNA using the four ribonucleoside triphosphates as substrates. The chain is DNA-directed RNA polymerase subunit beta from Agrobacterium fabrum (strain C58 / ATCC 33970) (Agrobacterium tumefaciens (strain C58)).